The primary structure comprises 379 residues: Very late expression factor 1 (379 aa).

Residues 169 to 348 (VIDTILNFIN…YNIGLDETSS (180 aa)) enclose the Tyr recombinase domain. Residues Arg210, Lys239, Arg303, and His326 contribute to the active site. Tyr335 (O-(3'-phospho-DNA)-tyrosine intermediate) is an active-site residue. Positions 346-358 (TSSEEENNNDDDD) are enriched in acidic residues. Residues 346-379 (TSSEEENNNDDDDAQHNRNSSGSSGESLLYYRNE) form a disordered region. Positions 362–379 (NRNSSGSSGESLLYYRNE) are enriched in low complexity.

Belongs to the 'phage' integrase family.

In terms of biological role, plays a role in nucleocapsid assembly and serves an essential function during the final stages of the DNA packaging process. Participates in the processing of branched DNA molecules at the late stages of viral genome replication. This Lepidoptera (butterflies and moths) protein is Very late expression factor 1 (VLF-1).